A 613-amino-acid polypeptide reads, in one-letter code: Apoptosis-inducing factor 1, mitochondrial (613 aa).

Short sequence motifs (mitochondrial localization signal) lie at residues M1–R31 and K63–K89. Residues M1–M54 constitute a mitochondrion transit peptide. Positions A55 to G101 are cleaved as a propeptide — removed in mature form. Residues S100–K127 form a disordered region. A Phosphothreonine modification is found at T105. K109 bears the N6-succinyllysine mark. Phosphoserine occurs at positions 116 and 118. Residues F134–W483 are FAD-dependent oxidoreductase. FAD contacts are provided by residues G138 to A142, E164 to D165, R172, and K177. W196 contributes to the NAD(+) binding site. Position 233 (V233) interacts with FAD. A Glycyl lysine isopeptide (Lys-Gly) (interchain with G-Cter in ubiquitin) cross-link involves residue K255. Phosphoserine is present on S268. R285 lines the FAD pocket. A Phosphoserine modification is found at S292. NAD(+) contacts are provided by residues G308–L311, E336, and K342. At S371 the chain carries Phosphoserine. Residue K388 is modified to N6-acetyllysine. NAD(+) is bound at residue G399. D438 contacts FAD. The Nuclear localization signal signature appears at K446–R451. Residues E453–H454, W483, and E493 contribute to the NAD(+) site. Residues H454–H455 and W483 each bind FAD. Residues A513 to R529 show a composition bias toward polar residues. A disordered region spans residues A513 to P554. T521 carries the phosphothreonine modification. A phosphoserine mark is found at S524 and S530. N583 serves as a coordination point for NAD(+). At K593 the chain carries N6-acetyllysine.

This sequence belongs to the FAD-dependent oxidoreductase family. In terms of assembly, monomer (oxidized form). Homodimer (reduced form). Upon reduction with NADH, undergoes dimerization and forms tight, long-lived FADH2-NAD charge transfer complexes (CTC) resistant to oxidation. Also dimerizes with isoform 3 preventing its release from mitochondria. Interacts with XIAP/BIRC4. Interacts (via N-terminus) with EIF3G (via C-terminus). Interacts with PRELID1. Interacts with CHCHD4; the interaction increases in presence of NADH. Interacts with processed form of PARP1 (Poly [ADP-ribose] polymerase 1, processed C-terminus); interaction is mediated with poly-ADP-ribose chains attached to PARP1, promoting translocation into the nucleus. It depends on FAD as a cofactor. Post-translationally, under normal conditions, a 54-residue N-terminal segment is first proteolytically removed during or just after translocation into the mitochondrial intermembrane space (IMS) by the mitochondrial processing peptidase (MPP) to form the inner-membrane-anchored mature form (AIFmit). During apoptosis, it is further proteolytically processed at amino-acid position 101 leading to the generation of the mature form, which is confined to the mitochondrial IMS in a soluble form (AIFsol). AIFsol is released to the cytoplasm in response to specific death signals, and translocated to the nucleus, where it induces nuclear apoptosis in a caspase-independent manner. In terms of processing, ubiquitination by XIAP/BIRC4 does not lead to proteasomal degradation. Ubiquitination at Lys-255 by XIAP/BIRC4 blocks its ability to bind DNA and induce chromatin degradation, thereby inhibiting its ability to induce cell death. As to expression, expressed in all tested tissues. Detected in muscle and skin fibroblasts (at protein level). Expressed in osteoblasts (at protein level). Brain specific. In terms of tissue distribution, expressed in all tested tissues except brain. As to expression, isoform 5 is frequently down-regulated in human cancers.

Its subcellular location is the mitochondrion intermembrane space. The protein resides in the mitochondrion inner membrane. It is found in the cytoplasm. The protein localises to the nucleus. It localises to the perinuclear region. Its subcellular location is the mitochondrion. The protein resides in the cytosol. The catalysed reaction is A + NADH + H(+) = AH2 + NAD(+). Its function is as follows. Functions both as NADH oxidoreductase and as regulator of apoptosis. In response to apoptotic stimuli, it is released from the mitochondrion intermembrane space into the cytosol and to the nucleus, where it functions as a proapoptotic factor in a caspase-independent pathway. Release into the cytoplasm is mediated upon binding to poly-ADP-ribose chains. The soluble form (AIFsol) found in the nucleus induces 'parthanatos' i.e. caspase-independent fragmentation of chromosomal DNA. Binds to DNA in a sequence-independent manner. Interacts with EIF3G, and thereby inhibits the EIF3 machinery and protein synthesis, and activates caspase-7 to amplify apoptosis. Plays a critical role in caspase-independent, pyknotic cell death in hydrogen peroxide-exposed cells. In contrast, participates in normal mitochondrial metabolism. Plays an important role in the regulation of respiratory chain biogenesis by interacting with CHCHD4 and controlling CHCHD4 mitochondrial import. Functionally, has NADH oxidoreductase activity. Does not induce nuclear apoptosis. In terms of biological role, pro-apoptotic isoform. The sequence is that of Apoptosis-inducing factor 1, mitochondrial from Homo sapiens (Human).